The primary structure comprises 102 residues: Small ribosomal subunit protein uS10 (102 aa).

Belongs to the universal ribosomal protein uS10 family. In terms of assembly, part of the 30S ribosomal subunit.

Its function is as follows. Involved in the binding of tRNA to the ribosomes. The sequence is that of Small ribosomal subunit protein uS10 from Kineococcus radiotolerans (strain ATCC BAA-149 / DSM 14245 / SRS30216).